Here is a 321-residue protein sequence, read N- to C-terminus: ATP-dependent 6-phosphofructokinase (321 aa).

Gly-10 serves as a coordination point for ATP. 20–24 (RAVVR) contributes to the ADP binding site. ATP-binding positions include 71–72 (RD) and 101–104 (GEGT). Glu-102 is a binding site for Mg(2+). Position 125–127 (125–127 (TID)) interacts with substrate. Asp-127 functions as the Proton acceptor in the catalytic mechanism. Arg-154 contacts ADP. Residues Arg-162 and 169 to 171 (MGR) each bind substrate. ADP-binding positions include 185–187 (GAE) and 213–215 (KLH). Substrate-binding positions include Glu-222, Arg-246, and 252–255 (HIQR).

The protein belongs to the phosphofructokinase type A (PFKA) family. ATP-dependent PFK group I subfamily. Prokaryotic clade 'B1' sub-subfamily. As to quaternary structure, homotetramer. Mg(2+) serves as cofactor.

It localises to the cytoplasm. The catalysed reaction is beta-D-fructose 6-phosphate + ATP = beta-D-fructose 1,6-bisphosphate + ADP + H(+). It functions in the pathway carbohydrate degradation; glycolysis; D-glyceraldehyde 3-phosphate and glycerone phosphate from D-glucose: step 3/4. With respect to regulation, allosterically activated by ADP and other diphosphonucleosides, and allosterically inhibited by phosphoenolpyruvate. Its function is as follows. Catalyzes the phosphorylation of D-fructose 6-phosphate to fructose 1,6-bisphosphate by ATP, the first committing step of glycolysis. This is ATP-dependent 6-phosphofructokinase from Aquifex aeolicus (strain VF5).